The primary structure comprises 283 residues: Glutamate racemase (283 aa).

Residues 7–8 (DS) and 39–40 (YG) contribute to the substrate site. Cysteine 70 functions as the Proton donor/acceptor in the catalytic mechanism. Substrate is bound at residue 71–72 (NT). The active-site Proton donor/acceptor is cysteine 206. 207–208 (TH) is a binding site for substrate.

This sequence belongs to the aspartate/glutamate racemases family.

The catalysed reaction is L-glutamate = D-glutamate. It functions in the pathway cell wall biogenesis; peptidoglycan biosynthesis. In terms of biological role, provides the (R)-glutamate required for cell wall biosynthesis. This Phenylobacterium zucineum (strain HLK1) protein is Glutamate racemase.